The chain runs to 443 residues: Xaa-Pro dipeptidase (443 aa).

Mn(2+) contacts are provided by Asp-246, Asp-257, His-339, Glu-384, and Glu-423.

Belongs to the peptidase M24B family. Bacterial-type prolidase subfamily. Mn(2+) serves as cofactor.

It catalyses the reaction Xaa-L-Pro dipeptide + H2O = an L-alpha-amino acid + L-proline. Splits dipeptides with a prolyl residue in the C-terminal position. This chain is Xaa-Pro dipeptidase, found in Shigella boydii serotype 18 (strain CDC 3083-94 / BS512).